Here is a 1342-residue protein sequence, read N- to C-terminus: MVYSYTEKKRIRKDFGKRPQVLDVPYLLSIQLDSFQKFIEQDPEGQYGLEAAFRSVFPIQSYSGNSELQYVSYRLGEPVFDVQECQIRGVTYSAPLRVKLRLVIYEREAPEGTVKDIKEQEVYMGEIPLMTDNGTFVINGTERVIVSQLHRSPGVFFDSDKGKTHSSGKVLYNARIIPYRGSWLDFEFDPKDNLFVRIDRRRKLPATIILRALNYTTEQILDLFFEKVVFEIRDNKLQMELIPERLRGETASFDIEANGKVYVEKGRRITARHIRQLEKDDIKHIEVPVEYIAGKVVSKDYVDESTGELICAANMELSLDLLAKLSQSGHKRIETLFTNDLDHGPYISETVRVDPTNDRLSALVEIYRMMRPGEPPTREAAESLFENLFFSEDRYDLSAVGRMKFNRSLLRDEIEGSGILSKDDIIDVMKKLIDIRNGKGEVDDIDHLGNRRIRSVGEMAENQFRVGLVRVERAVKERLSLGDLDTLMPQDMINAKPISAAVKEFFGSSQLSQFMDQNNPLSEITHKRRISALGPGGLTRERAGFEVRDVHPTHYGRVCPIETPEGPNIGLINSLSVYAQTNEYGFLETPYRRVVDGVVTDEIHYLSAIEEGNYVIAQANSNLDDEGHFVEDLVTCRSKGESSLFSRDQVDYMDVSTQQVVSVGASLIPFLEHDDANRALMGANMQRQAVPTLRADKPLVGTGMERAVAVDSGVTAVAKRGGTVQYVDASRIVIKVNEDEMYPGEAGIDIYNLTKYTRSNQNTCINQMPCVSLGEPVERGDVLADGPSTDLGELALGQNMRVAFMPWNGYNFEDSILVSERVVQEDRFTTIHIQELACVSRDTKLGPEEITADIPNVGEAALSKLDESGIVYIGAEVTGGDILVGKVTPKGETQLTPEEKLLRAIFGEKASDVKDSFLRVPNGVSGTVIDVQVFTRDGVEKDKRALEIEEMQLKQAKKDLSEELQILEAGLFSRIRAVLVSGGVEAEKLDKLPRDRWLELGLTDEEKQNQLEQLAEQYDELKHEFEKKLEAKRRKITQGDDLAPGVLKIVKVYLAVKRRIQPGDKMAGRHGNKGVISKINPIEDMPYDENGTPVDIVLNPLGVPSRMNIGQILETHLGMAAKGIGDKINAMLKQQQEVAKLREFIQRAYDLGADVRQKVDLSTFSDDEVLRLAENLRKGMPIATPVFDGAKEAEIKELLKLGDLPTSGQITLFDGRTGEQFERPVTVGYMYMLKLNHLVDDKMHARSTGSYSLVTQQPLGGKAQFGGQRFGEMEVWALEAYGAAYTLQEMLTVKSDDVNGRTKMYKNIVDGNHQMEPGMPESFNVLLKEIRSLGINIELEDE.

Belongs to the RNA polymerase beta chain family. The RNAP catalytic core consists of 2 alpha, 1 beta, 1 beta' and 1 omega subunit. When a sigma factor is associated with the core the holoenzyme is formed, which can initiate transcription.

The enzyme catalyses RNA(n) + a ribonucleoside 5'-triphosphate = RNA(n+1) + diphosphate. In terms of biological role, DNA-dependent RNA polymerase catalyzes the transcription of DNA into RNA using the four ribonucleoside triphosphates as substrates. The protein is DNA-directed RNA polymerase subunit beta of Salmonella typhi.